The chain runs to 189 residues: Small ribosomal subunit protein uS5 (189 aa).

In terms of domain architecture, S5 DRBM spans 22–85 (FVDKLVAINR…EAAKRDLIFV (64 aa)).

Belongs to the universal ribosomal protein uS5 family. Part of the 30S ribosomal subunit. Contacts proteins S4 and S8.

With S4 and S12 plays an important role in translational accuracy. Its function is as follows. Located at the back of the 30S subunit body where it stabilizes the conformation of the head with respect to the body. The protein is Small ribosomal subunit protein uS5 of Sinorhizobium medicae (strain WSM419) (Ensifer medicae).